The chain runs to 475 residues: UDP-N-acetylmuramate--L-alanine ligase (475 aa).

121-127 (GTHGKTT) provides a ligand contact to ATP.

This sequence belongs to the MurCDEF family.

It is found in the cytoplasm. The catalysed reaction is UDP-N-acetyl-alpha-D-muramate + L-alanine + ATP = UDP-N-acetyl-alpha-D-muramoyl-L-alanine + ADP + phosphate + H(+). Its pathway is cell wall biogenesis; peptidoglycan biosynthesis. Functionally, cell wall formation. This Salinibacter ruber (strain DSM 13855 / M31) protein is UDP-N-acetylmuramate--L-alanine ligase.